The sequence spans 197 residues: Imidazoleglycerol-phosphate dehydratase (197 aa).

It belongs to the imidazoleglycerol-phosphate dehydratase family.

Its subcellular location is the cytoplasm. It carries out the reaction D-erythro-1-(imidazol-4-yl)glycerol 3-phosphate = 3-(imidazol-4-yl)-2-oxopropyl phosphate + H2O. Its pathway is amino-acid biosynthesis; L-histidine biosynthesis; L-histidine from 5-phospho-alpha-D-ribose 1-diphosphate: step 6/9. The chain is Imidazoleglycerol-phosphate dehydratase (hisB) from Streptomyces coelicolor (strain ATCC BAA-471 / A3(2) / M145).